The following is a 262-amino-acid chain: Aminoglycoside 3'-phosphotransferase (262 aa).

Catalysis depends on D187, which acts as the Proton acceptor.

This sequence belongs to the aminoglycoside phosphotransferase family. Monomer.

Its subcellular location is the cytoplasm. It catalyses the reaction kanamycin A + ATP = kanamycin 3'-phosphate + ADP + H(+). Functionally, resistance to butirosin and structurally-related aminoglycosides, including kanamycin and amikacin. The polypeptide is Aminoglycoside 3'-phosphotransferase (Niallia circulans (Bacillus circulans)).